The sequence spans 49 residues: Large ribosomal subunit protein bL33 (49 aa).

The protein belongs to the bacterial ribosomal protein bL33 family.

This chain is Large ribosomal subunit protein bL33, found in Natranaerobius thermophilus (strain ATCC BAA-1301 / DSM 18059 / JW/NM-WN-LF).